The chain runs to 392 residues: MEEQQPEPKSQRDSALGAAAAATPGGLSLSLSPGASGSSGSGSDGDSVPVSPQPAPPSPPAAPCLPPLAHHPHLPPHPPPPPPQHLAAPAHQPQPAAQLHRTTNFFIDNILRPDFGCKKEQPPPQLLVAAAARGGAGGGGRVERDRGQTAAGRDPVHPLGTRAPGAASLLCAPDANCGPPDGSQPAAAGAGASKAGNPAAAAAAAAAAVAAAAAAAAAKPSDTGGGGSGGGAGSPGAQGTKYPEHGNPAILLMGSANGGPVVKTDSQQPLVWPAWVYCTRYSDRPSSGPRTRKLKKKKNEKEDKRPRTAFTAEQLQRLKAEFQANRYITEQRRQTLAQELSLNESQIKIWFQNKRAKIKKATGIKNGLALHLMAQGLYNHSTTTVQDKDESE.

Disordered stretches follow at residues 1–100 (MEEQ…AQLH), 132–164 (ARGGAGGGGRVERDRGQTAAGRDPVHPLGTRAP), 219–251 (KPSDTGGGGSGGGAGSPGAQGTKYPEHGNPAIL), and 282–306 (SDRPSSGPRTRKLKKKKNEKEDKRP). Residues 14–36 (SALGAAAAATPGGLSLSLSPGAS) show a composition bias toward low complexity. 2 stretches are compositionally biased toward pro residues: residues 51-66 (SPQPAPPSPPAAPCLP) and 75-84 (PPHPPPPPPQ). Residues 85–100 (HLAAPAHQPQPAAQLH) are compositionally biased toward low complexity. Residues 223–236 (TGGGGSGGGAGSPG) show a composition bias toward gly residues. Residues 303–362 (DKRPRTAFTAEQLQRLKAEFQANRYITEQRRQTLAQELSLNESQIKIWFQNKRAKIKKAT) constitute a DNA-binding region (homeobox).

It belongs to the engrailed homeobox family.

It is found in the nucleus. Its function is as follows. Required for proper formation of the apical ectodermal ridge and correct dorsal-ventral patterning in the limb. The polypeptide is Homeobox protein engrailed-1 (EN1) (Homo sapiens (Human)).